A 90-amino-acid chain; its full sequence is Small ribosomal subunit protein uS15c (90 aa).

It belongs to the universal ribosomal protein uS15 family. As to quaternary structure, part of the 30S ribosomal subunit.

The protein resides in the plastid. Its subcellular location is the chloroplast. This chain is Small ribosomal subunit protein uS15c (rps15), found in Mesostigma viride (Green alga).